Reading from the N-terminus, the 859-residue chain is Catenin delta-1 (859 aa).

The stretch at 15-44 (SVRAQEAQFELLSRALEEERRHVTAQLDRV) forms a coiled coil. Positions 226–254 (IDGPDYATTGRRGANGGDPRRRLRSYEDP) are disordered. Residues 243-254 (DPRRRLRSYEDP) show a composition bias toward basic and acidic residues. 10 ARM repeats span residues 279–317 (APNSGPWRHPELPEVLAMLSYTLDAVRLNAAAYLQHLSY), 320–359 (EDVKREVCRLRGIPPLISLLEDPRAPIRLAACGALKNLSY), 363–401 (RENKMAVKNCDGVPALARLLRRRGEGIEGRELAECVTGT), 402–446 (LWNL…RVEG), 464–503 (LRNISSERSEARRKMRECEGLVDSVVHILRSEVSHGLVDS), 513–552 (LRNISYHVHREIPHAEKYMESPQNASAETQNPSCFGVRRG), 574–614 (AQGY…NLCA), 621–660 (RCIRAAVRQEKGLSSLADHLTHESERVVRAICGALRNLCG), 661–700 (DNRNRELIGKHALNSLVARLSSSSAQSSALSEDTNVCVIN), and 701–746 (TIHE…GFCL).

It belongs to the beta-catenin family. In terms of assembly, interacts with C-cadherin and with zbtb33. In terms of tissue distribution, ubiquitously expressed.

The protein resides in the cell junction. It localises to the adherens junction. Its subcellular location is the cytoplasm. It is found in the nucleus. The protein localises to the cell membrane. Its function is as follows. Key regulator of cell-cell adhesion that associates with and regulates the cell adhesion properties of both C-, E- and N-cadherins, being critical for their surface stability. Beside cell-cell adhesion, regulates gene transcription through several transcription factors including ZBTB33/Kaiso2 and GLIS2, and the activity of Rho family GTPases and downstream cytoskeletal dynamics. Implicated both in cell transformation by SRC and in ligand-induced receptor signaling through the EGF, PDGF, CSF-1 and ERBB2 receptors. Required for gastrulation, axial elongation and development of the craniofacial skeleton and eye. The polypeptide is Catenin delta-1 (ctnnd1) (Xenopus laevis (African clawed frog)).